A 102-amino-acid polypeptide reads, in one-letter code: MDPPTRPSVSGPRTRARPPPPEALPTVGFEEEVYDCLDYYYLRDFPASGAGRSKGRTRREQQLRTNYPVPGGHERKVAQILLNGQRKRRQRQLQPRPRTRLA.

2 disordered regions span residues 1-26 and 46-102; these read MDPP…ALPT and PASG…TRLA. The segment covering 85-102 has biased composition (basic residues); sequence QRKRRQRQLQPRPRTRLA.

This sequence belongs to the NUPR family.

The protein localises to the nucleus. In terms of biological role, acts as a transcriptional repressor by inhibiting gene expression at the NUPR1 promoter in a p53/TP53-dependent manner in cancer cells. Involved in the G1 cell cycle arrest, and in a decrease in cell viability and cell proliferation of pancreatic cancer cells. Plays a role as a negative regulator of the protumoral factor NUPR1. The sequence is that of Nuclear protein 2 from Mus musculus (Mouse).